A 459-amino-acid chain; its full sequence is ATP-dependent protease ATPase subunit HslU (459 aa).

Residues V18, 60–65 (GVGKTE), D272, E337, and R409 each bind ATP.

It belongs to the ClpX chaperone family. HslU subfamily. A double ring-shaped homohexamer of HslV is capped on each side by a ring-shaped HslU homohexamer. The assembly of the HslU/HslV complex is dependent on binding of ATP.

It is found in the cytoplasm. Functionally, ATPase subunit of a proteasome-like degradation complex; this subunit has chaperone activity. The binding of ATP and its subsequent hydrolysis by HslU are essential for unfolding of protein substrates subsequently hydrolyzed by HslV. HslU recognizes the N-terminal part of its protein substrates and unfolds these before they are guided to HslV for hydrolysis. The polypeptide is ATP-dependent protease ATPase subunit HslU (Thermoanaerobacter sp. (strain X514)).